The following is a 129-amino-acid chain: Follitropin subunit beta (129 aa).

The signal sequence occupies residues 1–20; it reads MKSLQFCFLFCCWKAICCNS. Disulfide bonds link C21-C69, C35-C84, C38-C122, C46-C100, C50-C102, and C105-C112. N-linked (GlcNAc...) asparagine glycans are attached at residues N25 and N42.

It belongs to the glycoprotein hormones subunit beta family. As to quaternary structure, heterodimer. The active follitropin is a heterodimer composed of an alpha chain/CGA shared with other hormones and a unique beta chain/FSHB shown here.

The protein localises to the secreted. Functionally, together with the alpha chain CGA constitutes follitropin, the follicle-stimulating hormone, and provides its biological specificity to the hormone heterodimer. Binds FSHR, a G protein-coupled receptor, on target cells to activate downstream signaling pathways. Follitropin is involved in follicle development and spermatogenesis in reproductive organs. The sequence is that of Follitropin subunit beta (FSHB) from Sus scrofa (Pig).